We begin with the raw amino-acid sequence, 305 residues long: Tyrosine recombinase XerC (305 aa).

A Core-binding (CB) domain is found at 4-95 (TSIQELIDKW…AVKNFYRFLE (92 aa)). The 183-residue stretch at 116 to 298 (LLPKALSEDD…SIKHLEAVYT (183 aa)) folds into the Tyr recombinase domain. Catalysis depends on residues arginine 159, lysine 182, histidine 250, arginine 253, and histidine 276. The O-(3'-phospho-DNA)-tyrosine intermediate role is filled by tyrosine 285.

The protein belongs to the 'phage' integrase family. XerC subfamily. As to quaternary structure, forms a cyclic heterotetrameric complex composed of two molecules of XerC and two molecules of XerD.

The protein localises to the cytoplasm. Functionally, site-specific tyrosine recombinase, which acts by catalyzing the cutting and rejoining of the recombining DNA molecules. The XerC-XerD complex is essential to convert dimers of the bacterial chromosome into monomers to permit their segregation at cell division. It also contributes to the segregational stability of plasmids. This is Tyrosine recombinase XerC from Rickettsia felis (strain ATCC VR-1525 / URRWXCal2) (Rickettsia azadi).